Consider the following 134-residue polypeptide: Putative nickel-responsive regulator (134 aa).

The Ni(2+) site is built by His-78, His-89, His-91, and Cys-97.

The protein belongs to the transcriptional regulatory CopG/NikR family. Ni(2+) is required as a cofactor.

Transcriptional regulator. This Chlorobium limicola (strain DSM 245 / NBRC 103803 / 6330) protein is Putative nickel-responsive regulator.